The chain runs to 374 residues: Alcohol dehydrogenase class-3 (374 aa).

Position 2 is an N-acetylalanine (Ala-2). Zn(2+) contacts are provided by Cys-45, His-67, Cys-97, Cys-100, Cys-103, Cys-111, and Cys-174. Residue Lys-233 is modified to N6-succinyllysine. Ser-247 carries the phosphoserine modification. At Lys-315 the chain carries N6-succinyllysine. Ser-324 and Ser-351 each carry phosphoserine.

It belongs to the zinc-containing alcohol dehydrogenase family. Class-III subfamily. Homodimer. Zn(2+) is required as a cofactor. As to expression, ubiquitous.

The protein resides in the cytoplasm. It carries out the reaction a primary alcohol + NAD(+) = an aldehyde + NADH + H(+). The catalysed reaction is a secondary alcohol + NAD(+) = a ketone + NADH + H(+). The enzyme catalyses S-(hydroxymethyl)glutathione + NADP(+) = S-formylglutathione + NADPH + H(+). It catalyses the reaction S-(hydroxymethyl)glutathione + NAD(+) = S-formylglutathione + NADH + H(+). It carries out the reaction 20-oxo-(5Z,8Z,11Z,14Z)-eicosatetraenoate + NAD(+) + H2O = (5Z,8Z,11Z,14Z)-eicosatetraenedioate + NADH + 2 H(+). The catalysed reaction is 20-hydroxy-(5Z,8Z,11Z,14Z)-eicosatetraenoate + NAD(+) = 20-oxo-(5Z,8Z,11Z,14Z)-eicosatetraenoate + NADH + H(+). The enzyme catalyses S-nitrosoglutathione + NADH + H(+) = S-(hydroxysulfenamide)glutathione + NAD(+). Catalyzes the oxidation of long-chain primary alcohols and the oxidation of S-(hydroxymethyl) glutathione. Also oxidizes long chain omega-hydroxy fatty acids, such as 20-HETE, producing both the intermediate aldehyde, 20-oxoarachidonate and the end product, a dicarboxylic acid, (5Z,8Z,11Z,14Z)-eicosatetraenedioate. Class-III ADH is remarkably ineffective in oxidizing ethanol. Required for clearance of cellular formaldehyde, a cytotoxic and carcinogenic metabolite that induces DNA damage. Also acts as a S-nitroso-glutathione reductase by catalyzing the NADH-dependent reduction of S-nitrosoglutathione, thereby regulating protein S-nitrosylation. The chain is Alcohol dehydrogenase class-3 from Mus musculus (Mouse).